The following is a 427-amino-acid chain: Male abnormal protein mab-31 (427 aa).

A disordered region spans residues 68–102 (PIGTGRFPNPSPPRSSSGTNTPIRKTPGSRPDRGK).

It is found in the nucleus. In terms of biological role, putative transcription factor. Acts in a TGF-beta-like pathway during development of male-specific genital sensilla (simple sense organs), known as rays. Involved in production of reactive oxygen species (ROS), acting downstream of the TGF-beta-like dbl-1 signaling pathway. Involved in locomotory behavior. The sequence is that of Male abnormal protein mab-31 from Caenorhabditis elegans.